A 2200-amino-acid chain; its full sequence is Non-reducing polyketide synthase tpeB (2200 aa).

Positions F16–H255 constitute a Starter acyltransferase (SAT) domain. In terms of domain architecture, Ketosynthase family 3 (KS3) spans S382–E815. Catalysis depends on for beta-ketoacyl synthase activity residues C554, H690, and H729. The region spanning V914–L1202 is the Malonyl-CoA:ACP transacylase (MAT) domain. The interval T1296–G1621 is product template (PT) domain. Residues Q1300–D1433 are N-terminal hotdog fold. The PKS/mFAS DH domain maps to Q1300–T1617. H1332 serves as the catalytic Proton acceptor; for dehydratase activity. The C-terminal hotdog fold stretch occupies residues N1462–T1617. The active-site Proton donor; for dehydratase activity is D1522. Positions D1625–S1652 are disordered. Residues N1636–T1650 show a composition bias toward low complexity. Carrier domains follow at residues T1671–P1748 and A1791–T1865. S1708 and S1825 each carry O-(pantetheine 4'-phosphoryl)serine. The tract at residues M1931–M2173 is thioesterase (TE) domain.

Pantetheine 4'-phosphate serves as cofactor.

The protein operates within secondary metabolite biosynthesis. In terms of biological role, non-reducing polyketide synthase; part of the gene cluster that mediates the biosynthesis of polyesters containing 2,4-dihydroxy-6-(2-hydroxypropyl)benzoate and 3-hydroxybutyrate moieties, such as talapolyester G, 15G256beta and 15G256beta-2; as well as to oxidized derivatives such as 15G256alpha. The biosynthesis of the polyesters probably starts with the formation of the diketide 3-hydroxybutyryl-S-ACP catalyzed by the partially reducing polyketide synthase tpeA. The acceptance of 3-hydroxybutyryl by the non-reducing polyketide synthase tpeB would initiate further elongation and cyclization, catalyzed by KS and PT, respectively, to form 2,4-dihydroxy-6-(2-hydroxyn-propyl)benzoyl-S-ACP intermediate. The TE domain could catalyze lactonization at this step to yield 6-hydroxymellein as a derailment product. The polyesterification process maybe occurs when additional molecules of 3-hydroxybutyryl are transferred to tpeB. Following the first esterification step, an intramolecular cyclization catalyzed by the TE domain of tpeB would give talarodioxadione 1, whereas the ethyl esterification of talapolyester G perhaps happens spontaneously. Further oxidation by the cytochrome P450 monooxygenase tpeC then leads to the formation of oxidized derivatives. This chain is Non-reducing polyketide synthase tpeB, found in Talaromyces stipitatus (strain ATCC 10500 / CBS 375.48 / QM 6759 / NRRL 1006) (Penicillium stipitatum).